The sequence spans 275 residues: MKLISWNIDSLNAALTSDSARAKLSQEVLQTLVAENADIIAIQETKLSAKGPTKKHVEILEELFPGYENTWRSSQEPARKGYAGTMFLYKKELTPTISFPEIGAPSTMDLEGRIITLEFDAFFVTQVYTPNAGDGLKRLEERQVWDAKYAEYLAELDKEKPVLATGDYNVAHNEIDLANPASNRRSPGFTDEERAGFTNLLATGFTDTFRHVHGDVPERYTWWAQRSKTSKINNTGWRIDYWLTSNRIADKVTKSDMIDSGARQDHTPIVLEIDL.

Residues D9 and E44 each contribute to the Mg(2+) site. Y128 is a catalytic residue. D167, N169, and D265 together coordinate Mg(2+). The active-site Proton donor/acceptor is D167.

Belongs to the DNA repair enzymes AP/ExoA family. It depends on Mg(2+) as a cofactor. Mn(2+) is required as a cofactor.

It is found in the cytoplasm. The catalysed reaction is Exonucleolytic cleavage in the 3'- to 5'-direction to yield nucleoside 5'-phosphates.. Functionally, in addition to 3'- to 5'-exonuclease and 3'-phosphatase activities, ExoA was shown to make single-strand breaks at apurinic sites in DNA. This is Exodeoxyribonuclease (exoA) from Streptococcus pneumoniae serotype 4 (strain ATCC BAA-334 / TIGR4).